The primary structure comprises 346 residues: Tetraacyldisaccharide 4'-kinase (346 aa).

Residue 62–69 (TAGGTGKT) participates in ATP binding.

It belongs to the LpxK family.

The enzyme catalyses a lipid A disaccharide + ATP = a lipid IVA + ADP + H(+). It participates in glycolipid biosynthesis; lipid IV(A) biosynthesis; lipid IV(A) from (3R)-3-hydroxytetradecanoyl-[acyl-carrier-protein] and UDP-N-acetyl-alpha-D-glucosamine: step 6/6. Transfers the gamma-phosphate of ATP to the 4'-position of a tetraacyldisaccharide 1-phosphate intermediate (termed DS-1-P) to form tetraacyldisaccharide 1,4'-bis-phosphate (lipid IVA). In Xanthomonas oryzae pv. oryzae (strain MAFF 311018), this protein is Tetraacyldisaccharide 4'-kinase.